A 162-amino-acid polypeptide reads, in one-letter code: D-aminoacyl-tRNA deacylase (162 aa).

The short motif at 145–146 (GP) is the Gly-cisPro motif, important for rejection of L-amino acids element.

It belongs to the DTD family. Homodimer.

Its subcellular location is the cytoplasm. The catalysed reaction is glycyl-tRNA(Ala) + H2O = tRNA(Ala) + glycine + H(+). The enzyme catalyses a D-aminoacyl-tRNA + H2O = a tRNA + a D-alpha-amino acid + H(+). Functionally, an aminoacyl-tRNA editing enzyme that deacylates mischarged D-aminoacyl-tRNAs. Also deacylates mischarged glycyl-tRNA(Ala), protecting cells against glycine mischarging by AlaRS. Acts via tRNA-based rather than protein-based catalysis; rejects L-amino acids rather than detecting D-amino acids in the active site. By recycling D-aminoacyl-tRNA to D-amino acids and free tRNA molecules, this enzyme counteracts the toxicity associated with the formation of D-aminoacyl-tRNA entities in vivo and helps enforce protein L-homochirality. The sequence is that of D-aminoacyl-tRNA deacylase from Bifidobacterium longum subsp. infantis (strain ATCC 15697 / DSM 20088 / JCM 1222 / NCTC 11817 / S12).